The chain runs to 193 residues: NADH-quinone oxidoreductase subunit B (193 aa).

4 residues coordinate [4Fe-4S] cluster: C72, C73, C137, and C167.

The protein belongs to the complex I 20 kDa subunit family. In terms of assembly, NDH-1 is composed of 14 different subunits. Subunits NuoB, C, D, E, F, and G constitute the peripheral sector of the complex. It depends on [4Fe-4S] cluster as a cofactor.

It localises to the cell inner membrane. It carries out the reaction a quinone + NADH + 5 H(+)(in) = a quinol + NAD(+) + 4 H(+)(out). In terms of biological role, NDH-1 shuttles electrons from NADH, via FMN and iron-sulfur (Fe-S) centers, to quinones in the respiratory chain. The immediate electron acceptor for the enzyme in this species is believed to be ubiquinone. Couples the redox reaction to proton translocation (for every two electrons transferred, four hydrogen ions are translocated across the cytoplasmic membrane), and thus conserves the redox energy in a proton gradient. The chain is NADH-quinone oxidoreductase subunit B from Bartonella bacilliformis (strain ATCC 35685 / KC583 / Herrer 020/F12,63).